The primary structure comprises 146 residues: Hemoglobin subunit beta (146 aa).

The Globin domain maps to 2 to 146 (HWTAEEKQLI…VAHALARKYH (145 aa)). Heme b-binding residues include histidine 63 and histidine 92.

It belongs to the globin family. Heterotetramer of two alpha chains and two beta chains. In terms of tissue distribution, red blood cells.

Its function is as follows. Involved in oxygen transport from the lung to the various peripheral tissues. The sequence is that of Hemoglobin subunit beta (HBB) from Phalacrocorax carbo (Great cormorant).